The primary structure comprises 1203 residues: MDKLPPSMRKRLYSLPQQVGAKAWIMDEEEDAEEEGAGGRQDPSRRSIRLRPLPSPSPSAAAGGTESRSSALGAADSEGPARGAGKSSTNGDCRRFRGSLASLGSRGGGSGGTGSGSSHGHLHDSAEERRLIAEGDASPGEDRTPPGLAAEPERPGASAQPAASPPPPQQPPQPASASCEQPSVDTAIKVEGGAAAGDQILPEAEVRLGQAGFMQRQFGAMLQPGVNKFSLRMFGSQKAVEREQERVKSAGFWIIHPYSDFRFYWDLTMLLLMVGNLIIIPVGITFFKDENTTPWIVFNVVSDTFFLIDLVLNFRTGIVVEDNTEIILDPQRIKMKYLKSWFMVDFISSIPVDYIFLIVETRIDSEVYKTARALRIVRFTKILSLLRLLRLSRLIRYIHQWEEIFHMTYDLASAVVRIVNLIGMMLLLCHWDGCLQFLVPMLQDFPDDCWVSINNMVNNSWGKQYSYALFKAMSHMLCIGYGRQAPVGMSDVWLTMLSMIVGATCYAMFIGHATALIQSLDSSRRQYQEKYKQVEQYMSFHKLPPDTRQRIHDYYEHRYQGKMFDEESILGELSEPLREEIINFNCRKLVASMPLFANADPNFVTSMLTKLRFEVFQPGDYIIREGTIGKKMYFIQHGVVSVLTKGNKETKLADGSYFGEICLLTRGRRTASVRADTYCRLYSLSVDNFNEVLEEYPMMRRAFETVALDRLDRIGKKNSILLHKVQHDLNSGVFNYQENEIIQQIVQHDREMAHCAHRVQAAASATPTPTPVIWTPLIQAPLQAAAATTSVAIALTHHPRLPAAIFRPPPGSGLGNLGAGQTPRHLKRLQSLIPSALGSASPASSPSQVDTPSSSSFHIQQLAGFSAPAGLSPLLPSSSSSPPPGACGSPSAPTPSAGVAATTIAGFGHFHKALGGSLSSSDSPLLTPLQPGARSPQAAQPSPAPPGARGGLGLPEHFLPPPPSSRSPSSSPGQLGQPPGELSLGLATGPLSTPETPPRQPEPPSLVAGASGGASPVGFTPRGGLSPPGHSPGPPRTFPSAPPRASGSHGSLLLPPASSPPPPQVPQRRGTPPLTPGRLTQDLKLISASQPALPQDGAQTLRRASPHSSGESMAAFPLFPRAGGGSGGSGSSGGLGPPGRPYGAIPGQHVTLPRKTSSGSLPPPLSLFGARATSSGGPPLTAGPQREPGARPEPVRSKLPSNL.

Residues 1–182 (MDKLPPSMRK…QPASASCEQP (182 aa)) are disordered. Residues 1-263 (MDKLPPSMRK…IIHPYSDFRF (263 aa)) lie on the Cytoplasmic side of the membrane. A compositionally biased stretch (acidic residues) spans 26 to 36 (MDEEEDAEEEG). Positions 105–117 (SRGGGSGGTGSGS) are enriched in gly residues. Residues 121–133 (HLHDSAEERRLIA) show a composition bias toward basic and acidic residues. Ser138 carries the phosphoserine modification. Positions 163-174 (ASPPPPQQPPQP) are enriched in pro residues. Residues 209-260 (GQAGFMQRQFGAMLQPGVNKFSLRMFGSQKAVEREQERVKSAGFWIIHPYSD) form an involved in subunit assembly region. Residues 264 to 286 (YWDLTMLLLMVGNLIIIPVGITF) traverse the membrane as a helical segment. Residues 287–293 (FKDENTT) lie on the Extracellular side of the membrane. The helical transmembrane segment at 294–314 (PWIVFNVVSDTFFLIDLVLNF) threads the bilayer. Residues 315-336 (RTGIVVEDNTEIILDPQRIKMK) lie on the Cytoplasmic side of the membrane. Residues 337 to 359 (YLKSWFMVDFISSIPVDYIFLIV) form a helical membrane-spanning segment. Residues 360–378 (ETRIDSEVYKTARALRIVR) lie on the Extracellular side of the membrane. A helical; Voltage-sensor membrane pass occupies residues 379–399 (FTKILSLLRLLRLSRLIRYIH). The Cytoplasmic segment spans residues 400–413 (QWEEIFHMTYDLAS). A helical membrane pass occupies residues 414–436 (AVVRIVNLIGMMLLLCHWDGCLQ). Residues 437 to 464 (FLVPMLQDFPDDCWVSINNMVNNSWGKQ) lie on the Extracellular side of the membrane. An N-linked (GlcNAc...) asparagine glycan is attached at Asn458. An intramembrane region (pore-forming) is located at residues 465-486 (YSYALFKAMSHMLCIGYGRQAP). Residues 487–491 (VGMSD) lie on the Extracellular side of the membrane. The chain crosses the membrane as a helical span at residues 492-517 (VWLTMLSMIVGATCYAMFIGHATALI). At 518-1203 (QSLDSSRRQY…PVRSKLPSNL (686 aa)) the chain is on the cytoplasmic side. The 3',5'-cyclic GMP site is built by Tyr559, Lys562, Phe564, and Glu566. Positions 659, 660, 662, 669, 670, 673, and 710 each coordinate 3',5'-cyclic AMP. Disordered regions lie at residues 836–856 (ALGS…SSSS), 870–897 (GLSP…TPSA), and 918–1203 (LSSS…PSNL). Low complexity-rich tracts occupy residues 918 to 941 (LSSS…AAQP) and 966 to 986 (RSPS…SLGL). The span at 995-1004 (ETPPRQPEPP) shows a compositional bias: pro residues. Residues 1005-1028 (SLVAGASGGASPVGFTPRGGLSPP) show a composition bias toward low complexity. The span at 1029–1042 (GHSPGPPRTFPSAP) shows a compositional bias: pro residues. A compositionally biased stretch (low complexity) spans 1045 to 1056 (ASGSHGSLLLPP). Phosphoserine occurs at positions 1105 and 1108. Residues 1122–1137 (AGGGSGGSGSSGGLGP) show a composition bias toward gly residues.

This sequence belongs to the potassium channel HCN family. As to quaternary structure, homotetramer. The channel assemble into homotetramers or heteromeric complexes that contains of four pore-forming subunits. Interacts with PEX5L with a 4:4 HCN4:PEX5L stoichiometry; reduces the effects of cAMP on the voltage-dependence and rate of activation. Interacts with IRAG1; regulates HCN4 channel activity. Interacts with IRAG2; regulates HCN4 channel activity. S-palmitoylated. As to expression, highly expressed in thalamus, testis and in heart, both in ventricle and atrium. Detected at much lower levels in amygdala, substantia nigra, cerebellum and hippocampus.

The protein resides in the cell membrane. It catalyses the reaction K(+)(in) = K(+)(out). It carries out the reaction Na(+)(in) = Na(+)(out). Activated by cAMP and to a lesser extent by cGMP and cCMP. cAMP binding causes a conformation change that leads to the assembly of an active tetramer and channel opening. Binding of cAMP removes a tonic inhibition conferred by cyclic nucleotide-binding domain (CNBD) on channel opening. Cyclic dinucleotides can modulate HCN4 channel; cyclic dinucleotides acting as potent antagonists of cAMP. Inhibited by extracellular Cs(+) ions. Auxiliary subunits can also regulate HCN4 channel. IRAG1 causes a gain-of-function by shifting HCN4 activation to more depolarized membrane potentials in the absence of cAMP. In contrast, IRAG2 causes a loss-of-function by inhibiting cAMP-dependent potentiation of HCN4 activation. In terms of biological role, hyperpolarization-activated ion channel that are permeable to Na(+) and K(+) ions with very slow activation and inactivation. Exhibits higher selectivity for K(+) over Na(+) ions. Contributes to the native pacemaker currents in heart (If) that regulate the rhythm of heart beat. Contributes to the native pacemaker currents in neurons (Ih). May mediate responses to sour stimuli. The polypeptide is Potassium/sodium hyperpolarization-activated cyclic nucleotide-gated channel 4 (Homo sapiens (Human)).